The chain runs to 687 residues: Dentin sialophosphoprotein (687 aa).

An N-terminal signal peptide occupies residues 1-17 (MKTKIIIYICIWATAWA). The disordered stretch occupies residues 54-113 (NNATNDDSPKGSELGRQVHSNGGYERDRNGSESIAVGGKSSPTQPILANAQGNSAKERED). A glycan (N-linked (GlcNAc...) asparagine) is linked at Asn-55. Thr-57 is modified (phosphothreonine; by CK2). N-linked (GlcNAc...) asparagine glycosylation occurs at Asn-82. Residues 93–107 (SSPTQPILANAQGNS) show a composition bias toward polar residues. The N-linked (GlcNAc...) asparagine glycan is linked to Asn-128. Residues 146 to 160 (EAKESKVHGQPHQDT) show a composition bias toward basic and acidic residues. Positions 146–687 (EAKESKVHGQ…SDSNHSTSDD (542 aa)) are disordered. Polar residues predominate over residues 161 to 194 (KTGLASDTSQNGDATLVQENEPQVAGSKNSTNHE). N-linked (GlcNAc...) asparagine glycosylation occurs at Asn-189. Ser-226 is modified (phosphoserine; by CK2). Ser-253 is modified (phosphoserine; by CK1). The span at 262 to 275 (GDGRESHDGTEGHE) shows a compositional bias: basic and acidic residues. Residues 276 to 292 (GQSSGGNNDNRGQGSVS) show a composition bias toward polar residues. Ser-278 carries the post-translational modification Phosphoserine; by CK1. Phosphoserine; by CK2 is present on Ser-292. A Phosphoserine; by CK1 modification is found at Ser-298. The N-linked (GlcNAc...) asparagine glycan is linked to Asn-312. Ser-315 carries the post-translational modification Phosphoserine; by CK2. Phosphothreonine; by CK2 occurs at positions 319 and 329. Phosphoserine; by CK2 occurs at positions 337 and 345. A compositionally biased stretch (polar residues) spans 352-375 (SGQSQNQGLETEGSSTGNKSSITK). Residue Ser-366 is modified to Phosphoserine; by CK1. N-linked (GlcNAc...) asparagine glycosylation is present at Asn-369. Positions 386-417 (SNGHHGMELDKRNSPKQGESDKPQGAAEKSDT) are enriched in basic and acidic residues. Positions 418–432 (HNNMGHSRIGSSSNS) are enriched in polar residues. The span at 447–460 (GDDPNSSDESNGSD) shows a compositional bias: low complexity. Residues 500-521 (DDSSDDTSDTDDSDSNGDDDSE) show a composition bias toward acidic residues. Positions 522 to 545 (SKDKDESDNSNHDNDSDSESKSDS) are enriched in basic and acidic residues. Over residues 555-598 (SSDSSDSSDSSETSDSSDSSDTSDSSDSSDSSDSSNSSDTSDSS) the composition is skewed to low complexity. Residues 599–617 (DSSDGDSSDGDSSDSDSSD) are compositionally biased toward acidic residues. A compositionally biased stretch (low complexity) spans 618-639 (SDSSNSSDSDSSDSSDSSSSDS). Acidic residues predominate over residues 667 to 677 (SDSDSDSDSEG). Residues 678 to 687 (SDSNHSTSDD) are compositionally biased toward low complexity.

In terms of assembly, interacts with FBLN7. In terms of processing, DSP is glycosylated. As to expression, specifically expressed in teeth, mainly in odontoblasts and transiently in pre-ameloblasts.

The protein localises to the secreted. It is found in the extracellular space. The protein resides in the extracellular matrix. DSP may be an important factor in dentinogenesis. DPP may bind high amount of calcium and facilitate initial mineralization of dentin matrix collagen as well as regulate the size and shape of the crystals. This chain is Dentin sialophosphoprotein (Dspp), found in Rattus norvegicus (Rat).